Here is a 229-residue protein sequence, read N- to C-terminus: MIKQLFWRGLLLALVLVVLYQFWIFMHILWWVEHNPSSSAFMRASLSALQQDNPDAALKHQWVEYQRISIHLKRAVIAAEDAKFVGHEGFDWDGIQKAYEKNWKQGKIVAGGSTISQQLAKNLFLSTKRTPWRKLEEAVITWMLERMMSKRRIFEIYLNVIEWGNGVFGAEAAARHYYRTSASSLNVAQAARLAAMIPNPRYYDKHREARGLIRKARIIEARMRYAEVP.

The helical transmembrane segment at 10–30 (LLLALVLVVLYQFWIFMHILW) threads the bilayer.

Belongs to the glycosyltransferase 51 family.

It localises to the cell inner membrane. It carries out the reaction [GlcNAc-(1-&gt;4)-Mur2Ac(oyl-L-Ala-gamma-D-Glu-L-Lys-D-Ala-D-Ala)](n)-di-trans,octa-cis-undecaprenyl diphosphate + beta-D-GlcNAc-(1-&gt;4)-Mur2Ac(oyl-L-Ala-gamma-D-Glu-L-Lys-D-Ala-D-Ala)-di-trans,octa-cis-undecaprenyl diphosphate = [GlcNAc-(1-&gt;4)-Mur2Ac(oyl-L-Ala-gamma-D-Glu-L-Lys-D-Ala-D-Ala)](n+1)-di-trans,octa-cis-undecaprenyl diphosphate + di-trans,octa-cis-undecaprenyl diphosphate + H(+). It participates in cell wall biogenesis; peptidoglycan biosynthesis. Functionally, peptidoglycan polymerase that catalyzes glycan chain elongation from lipid-linked precursors. The protein is Biosynthetic peptidoglycan transglycosylase of Methylobacillus flagellatus (strain ATCC 51484 / DSM 6875 / VKM B-1610 / KT).